The primary structure comprises 898 residues: Magnesium-transporting ATPase, P-type 1 (898 aa).

The Cytoplasmic segment spans residues 1–94 (MFKEIFTRLI…QPSPWWVHLW (94 aa)). Residues 95–115 (VCYRNPFNILLTILGAISYAT) form a helical membrane-spanning segment. Glu116 is a topological domain (extracellular). Residues 117–137 (DLFAAGVIALMVAISTLLNFI) form a helical membrane-spanning segment. Residues 138 to 287 (QEARSTKAAD…PNAFQQGISR (150 aa)) are Cytoplasmic-facing. A helical membrane pass occupies residues 288–308 (VSMLLIRFMLVMAPVVLLING). The Extracellular portion of the chain corresponds to 309 to 317 (YTKGDWWEA). A helical membrane pass occupies residues 318–335 (ALFALSVAVGLTPEMLPM). Position 331 (Glu331) interacts with Mg(2+). Over 336–695 (IVTSTLARGA…IEGRRTFANM (360 aa)) the chain is Cytoplasmic. The 4-aspartylphosphate intermediate role is filled by Asp373. 3 residues coordinate Mg(2+): Asp641, Asp645, and Asn709. The chain crosses the membrane as a helical span at residues 696-715 (LKYIKMTASSNFGNVFSVLV). At 716–724 (ASAFLPFLP) the chain is on the extracellular side. Residues 725–744 (MLPLHLLIQNLLYDVSQVAI) form a helical membrane-spanning segment. Positions 734 and 738 each coordinate Mg(2+). Over 745–766 (PFDNVDDEQIQKPQRWNPADLG) the chain is Cytoplasmic. Residues 767–790 (RFMIFFGPISSIFDILTFCLMWWV) traverse the membrane as a helical segment. Over 791–799 (FHANTPETQ) the chain is Extracellular. A helical membrane pass occupies residues 800-818 (TLFQSGWFVVGLLSQTLIV). Residues 819–831 (HMIRTRRVPFIQS) are Cytoplasmic-facing. Residues 832–851 (CASWPLMIMTVIVMIVGIAL) traverse the membrane as a helical segment. The Extracellular segment spans residues 852-866 (PFSPLASYLQLQALP). The chain crosses the membrane as a helical span at residues 867-886 (LSYFPWLVAILAGYMTLTQL). Residues 887–898 (VKGFYSRRYGWQ) lie on the Cytoplasmic side of the membrane.

The protein belongs to the cation transport ATPase (P-type) (TC 3.A.3) family. Type IIIB subfamily.

Its subcellular location is the cell inner membrane. The catalysed reaction is Mg(2+)(out) + ATP + H2O = Mg(2+)(in) + ADP + phosphate + H(+). Its function is as follows. Mediates magnesium influx to the cytosol. In Escherichia coli O157:H7, this protein is Magnesium-transporting ATPase, P-type 1 (mgtA).